The sequence spans 530 residues: Bifunctional purine biosynthesis protein PurH (530 aa).

In terms of domain architecture, MGS-like spans 1 to 148 (MEQARPIRRA…KNHKDVAIVV (148 aa)).

The protein belongs to the PurH family.

The catalysed reaction is (6R)-10-formyltetrahydrofolate + 5-amino-1-(5-phospho-beta-D-ribosyl)imidazole-4-carboxamide = 5-formamido-1-(5-phospho-D-ribosyl)imidazole-4-carboxamide + (6S)-5,6,7,8-tetrahydrofolate. The enzyme catalyses IMP + H2O = 5-formamido-1-(5-phospho-D-ribosyl)imidazole-4-carboxamide. It participates in purine metabolism; IMP biosynthesis via de novo pathway; 5-formamido-1-(5-phospho-D-ribosyl)imidazole-4-carboxamide from 5-amino-1-(5-phospho-D-ribosyl)imidazole-4-carboxamide (10-formyl THF route): step 1/1. Its pathway is purine metabolism; IMP biosynthesis via de novo pathway; IMP from 5-formamido-1-(5-phospho-D-ribosyl)imidazole-4-carboxamide: step 1/1. This is Bifunctional purine biosynthesis protein PurH from Aeromonas hydrophila subsp. hydrophila (strain ATCC 7966 / DSM 30187 / BCRC 13018 / CCUG 14551 / JCM 1027 / KCTC 2358 / NCIMB 9240 / NCTC 8049).